A 368-amino-acid polypeptide reads, in one-letter code: Probable dual-specificity RNA methyltransferase RlmN (368 aa).

The Proton acceptor role is filled by E111. Residues 117-355 (YPNRATLCIS…CTVRDTRGQE (239 aa)) enclose the Radical SAM core domain. A disulfide bond links C124 and C360. 3 residues coordinate [4Fe-4S] cluster: C131, C135, and C138. Residues 181–182 (GE), S215, 238–240 (SLH), and N317 contribute to the S-adenosyl-L-methionine site. C360 functions as the S-methylcysteine intermediate in the catalytic mechanism.

Belongs to the radical SAM superfamily. RlmN family. [4Fe-4S] cluster is required as a cofactor.

The protein resides in the cytoplasm. The enzyme catalyses adenosine(2503) in 23S rRNA + 2 reduced [2Fe-2S]-[ferredoxin] + 2 S-adenosyl-L-methionine = 2-methyladenosine(2503) in 23S rRNA + 5'-deoxyadenosine + L-methionine + 2 oxidized [2Fe-2S]-[ferredoxin] + S-adenosyl-L-homocysteine. It carries out the reaction adenosine(37) in tRNA + 2 reduced [2Fe-2S]-[ferredoxin] + 2 S-adenosyl-L-methionine = 2-methyladenosine(37) in tRNA + 5'-deoxyadenosine + L-methionine + 2 oxidized [2Fe-2S]-[ferredoxin] + S-adenosyl-L-homocysteine. Specifically methylates position 2 of adenine 2503 in 23S rRNA and position 2 of adenine 37 in tRNAs. This chain is Probable dual-specificity RNA methyltransferase RlmN, found in Corynebacterium diphtheriae (strain ATCC 700971 / NCTC 13129 / Biotype gravis).